The primary structure comprises 198 residues: HTH-type transcriptional regulator BetI (198 aa).

The region spanning 8-68 (PIRRQQLIDA…ATMRYLISHL (61 aa)) is the HTH tetR-type domain. A DNA-binding region (H-T-H motif) is located at residues 31 to 50 (TIAQIARRAGVSNGIISHYF).

The protein operates within amine and polyamine biosynthesis; betaine biosynthesis via choline pathway [regulation]. Its function is as follows. Repressor involved in the biosynthesis of the osmoprotectant glycine betaine. It represses transcription of the choline transporter BetT and the genes of BetAB involved in the synthesis of glycine betaine. This chain is HTH-type transcriptional regulator BetI, found in Serratia proteamaculans (strain 568).